The sequence spans 305 residues: Tyrosine recombinase XerC (305 aa).

The 92-residue stretch at 4 to 95 (TSIQALINKW…AVKNFYRFLE (92 aa)) folds into the Core-binding (CB) domain. One can recognise a Tyr recombinase domain in the interval 116-298 (LLPKALSEDD…SIKHLEAVYT (183 aa)). Active-site residues include Arg159, Lys182, His250, Arg253, and His276. The O-(3'-phospho-DNA)-tyrosine intermediate role is filled by Tyr285.

This sequence belongs to the 'phage' integrase family. XerC subfamily. In terms of assembly, forms a cyclic heterotetrameric complex composed of two molecules of XerC and two molecules of XerD.

It localises to the cytoplasm. Its function is as follows. Site-specific tyrosine recombinase, which acts by catalyzing the cutting and rejoining of the recombining DNA molecules. The XerC-XerD complex is essential to convert dimers of the bacterial chromosome into monomers to permit their segregation at cell division. It also contributes to the segregational stability of plasmids. The sequence is that of Tyrosine recombinase XerC from Rickettsia peacockii (strain Rustic).